The sequence spans 1043 residues: RNA cytidine acetyltransferase (1043 aa).

Residues Gly-285–Leu-294 and Arg-462 contribute to the ATP site. An N-acetyltransferase domain is found at Val-551 to Asn-736. Residues Val-622 to Val-624, Gln-629 to Gly-635, and Arg-723 each bind acetyl-CoA. Residues Ile-1020–Arg-1043 are disordered. Residues Asn-1030–Arg-1043 are compositionally biased toward basic residues.

This sequence belongs to the RNA cytidine acetyltransferase family. NAT10 subfamily. Part of the small subunit (SSU) processome, composed of more than 70 proteins and the RNA chaperone small nucleolar RNA (snoRNA) U3.

It is found in the nucleus. The protein localises to the nucleolus. The enzyme catalyses a cytidine in 18S rRNA + acetyl-CoA + ATP + H2O = an N(4)-acetylcytidine in 18S rRNA + ADP + phosphate + CoA + H(+). The catalysed reaction is a cytidine in tRNA + acetyl-CoA + ATP + H2O = an N(4)-acetylcytidine in tRNA + ADP + phosphate + CoA + H(+). Functionally, RNA cytidine acetyltransferase with specificity toward both 18S rRNA and tRNAs. Catalyzes the formation of N(4)-acetylcytidine (ac4C) in 18S rRNA. Required for early nucleolar cleavages of precursor rRNA at sites A0, A1 and A2 during 18S rRNA synthesis. Catalyzes the formation of ac4C in serine and leucine tRNAs. Requires a tRNA-binding adapter protein for full tRNA acetyltransferase activity but not for 18S rRNA acetylation. Part of the small subunit (SSU) processome, first precursor of the small eukaryotic ribosomal subunit. During the assembly of the SSU processome in the nucleolus, many ribosome biogenesis factors, an RNA chaperone and ribosomal proteins associate with the nascent pre-rRNA and work in concert to generate RNA folding, modifications, rearrangements and cleavage as well as targeted degradation of pre-ribosomal RNA by the RNA exosome. The sequence is that of RNA cytidine acetyltransferase from Caenorhabditis elegans.